A 302-amino-acid chain; its full sequence is Heme A synthase (302 aa).

Residues 1-6 lie on the Cytoplasmic side of the membrane; that stretch reads MNKALK. Residues 7 to 27 form a helical membrane-spanning segment; sequence GLGIITTIAMLFVLIGGALVT. The Extracellular segment spans residues 28 to 61; it reads KTGSGMGCGRSWPLCNGSIFPALTLESIIEWSHR. C35 and C42 are oxidised to a cystine. Residue E57 is part of the active site. A heme o-binding site is contributed by H60. Residues 62 to 82 form a helical membrane-spanning segment; it reads FVSGTSGVLVLALAIWTWKKI. At 83 to 91 the chain is on the cytoplasmic side; sequence GHIRETKFL. The helical transmembrane segment at 92 to 112 threads the bilayer; that stretch reads AVMSVVFLILQALLGAAAVVF. The Extracellular segment spans residues 113–120; the sequence is GSSALIMA. The chain crosses the membrane as a helical span at residues 121-141; that stretch reads LHFGISLISFASVLLLTLLVF. H122 provides a ligand contact to heme o. The Cytoplasmic segment spans residues 142-158; sequence EADSKQKSESFYIGKTM. The chain crosses the membrane as a helical span at residues 159–179; that stretch reads QFHMIGIIIYTYVVVYTGAYV. Topologically, residues 180–208 are extracellular; it reads RHTSSSLACLDFPMCSTENGWLPGKFHEW. An intrachain disulfide couples C188 to C194. A helical membrane pass occupies residues 209–229; that stretch reads VQMGHRAAALLLFAWIIAAAV. Heme b is bound at residue H213. Over 230 to 242 the chain is Cytoplasmic; it reads HAARQYKNQKRIY. Residues 243–263 form a helical membrane-spanning segment; sequence WGWMISLILIILQAASGIAVV. Residues 264–272 lie on the Extracellular side of the membrane; it reads YSRLDLGFA. A helical membrane pass occupies residues 273–293; that stretch reads LAHAFFISCLFGILCYFLLLV. H275 provides a ligand contact to heme b. The Cytoplasmic segment spans residues 294–302; the sequence is ARYRRQVQK.

The protein belongs to the COX15/CtaA family. Type 1 subfamily. As to quaternary structure, interacts with CtaB. The cofactor is heme b.

Its subcellular location is the cell membrane. It catalyses the reaction Fe(II)-heme o + 2 A + H2O = Fe(II)-heme a + 2 AH2. It functions in the pathway porphyrin-containing compound metabolism; heme A biosynthesis; heme A from heme O: step 1/1. In terms of biological role, catalyzes the conversion of heme O to heme A by two successive hydroxylations of the methyl group at C8. The first hydroxylation forms heme I, the second hydroxylation results in an unstable dihydroxymethyl group, which spontaneously dehydrates, resulting in the formyl group of heme A. The sequence is that of Heme A synthase from Bacillus licheniformis (strain ATCC 14580 / DSM 13 / JCM 2505 / CCUG 7422 / NBRC 12200 / NCIMB 9375 / NCTC 10341 / NRRL NRS-1264 / Gibson 46).